The following is a 311-amino-acid chain: Small ribosomal subunit biogenesis GTPase RsgA (311 aa).

One can recognise a CP-type G domain in the interval 77-239 (LSKQSHIIAT…IIDTPGIKGF (163 aa)). Residues 126–129 (NKTD) and 180–188 (GHSGVGKST) contribute to the GTP site. The Zn(2+) site is built by C263, C268, H270, and C276.

It belongs to the TRAFAC class YlqF/YawG GTPase family. RsgA subfamily. In terms of assembly, monomer. Associates with 30S ribosomal subunit, binds 16S rRNA. The cofactor is Zn(2+).

Its subcellular location is the cytoplasm. Functionally, one of several proteins that assist in the late maturation steps of the functional core of the 30S ribosomal subunit. Helps release RbfA from mature subunits. May play a role in the assembly of ribosomal proteins into the subunit. Circularly permuted GTPase that catalyzes slow GTP hydrolysis, GTPase activity is stimulated by the 30S ribosomal subunit. The sequence is that of Small ribosomal subunit biogenesis GTPase RsgA from Azobacteroides pseudotrichonymphae genomovar. CFP2.